The following is a 603-amino-acid chain: UvrABC system protein C (603 aa).

The GIY-YIG domain maps to 17 to 94 (TTSGCYKMLN…IKTHKPDYNV (78 aa)). Residues 199–234 (SEILSQIDIKLKLAVQKEDFETAIKLKEMKSSLIEI) enclose the UVR domain.

The protein belongs to the UvrC family. In terms of assembly, interacts with UvrB in an incision complex.

It localises to the cytoplasm. Functionally, the UvrABC repair system catalyzes the recognition and processing of DNA lesions. UvrC both incises the 5' and 3' sides of the lesion. The N-terminal half is responsible for the 3' incision and the C-terminal half is responsible for the 5' incision. The protein is UvrABC system protein C of Borrelia garinii subsp. bavariensis (strain ATCC BAA-2496 / DSM 23469 / PBi) (Borreliella bavariensis).